The following is a 73-amino-acid chain: Mucroporin-like peptide (73 aa).

An N-terminal signal peptide occupies residues 1-22 (MKVKCLLAVFLIVLIAAEHCQA). The residue at position 38 (lysine 38) is a Lysine amide. The propeptide occupies 44–73 (ELGTQFQPRQKNFMRREVDLERLFAEMPDY).

This sequence belongs to the non-disulfide-bridged peptide (NDBP) superfamily. Short antimicrobial peptide (group 4) family. Expressed by the venom gland.

It is found in the secreted. The protein localises to the target cell membrane. Functionally, cationic host defense peptide that have antibacterial activity by breaking membranes. Is more effective on Gram-positive than on Gram-negative bacteria. The polypeptide is Mucroporin-like peptide (Lychas mucronatus (Chinese swimming scorpion)).